The chain runs to 2320 residues: Sperm-associated antigen 17 (2320 aa).

Composition is skewed to basic and acidic residues over residues 139–171 (DQQRRENEKKMVEERTKSEKDKGKGKSPKEKKV) and 199–210 (RRGEDDEAKSYI). 11 disordered regions span residues 139 to 211 (DQQR…SYID), 388 to 407 (IPEPPPSTAPAPTGKKKAQY), 682 to 739 (AEQD…SMDQ), 894 to 928 (SASKIPGPKRSKTNKVSSKTELSDQEKDKEKEKDK), 950 to 1001 (EERL…AKTL), 1084 to 1118 (KEKEEKNSEEEEEEEEEKEEVEEKKPKEGEEEKVK), 1191 to 1221 (QGKGKAKPKGKEKHKDSIKEEELPKEEEKKN), 1334 to 1367 (SSPDSGPVYTSPELPTSPHNGDLVDSASQPKSET), 1393 to 1416 (DIIPEVPPPTPVESHIGTWFTTTP), 1983 to 2028 (KEAS…YENV), and 2080 to 2101 (TKESVSQRQTENVTRPPTEEPD). The span at 703–720 (VTGSTSNSTKPWNSSNRQ) shows a compositional bias: polar residues. Residues 865-965 (EEAKYQEAKM…EKKAEKKGKD (101 aa)) are a coiled coil. Composition is skewed to basic and acidic residues over residues 914-928 (ELSDQEKDKEKEKDK) and 950-999 (EERL…EPAK). The segment covering 1090–1103 (NSEEEEEEEEEKEE) has biased composition (acidic residues). Basic and acidic residues-rich tracts occupy residues 1104–1118 (VEEKKPKEGEEEKVK) and 1203–1221 (KHKDSIKEEELPKEEEKKN). 2 stretches are compositionally biased toward polar residues: residues 2012-2028 (VNKSLQTSSSQNQYENV) and 2082-2094 (ESVSQRQTENVTR).

As to quaternary structure, interacts (via the C-terminus) with SPAG6; the interaction probably occurs on polymerized microtubules. In terms of tissue distribution, highly expressed in testis, round spermatids, testicular sperm, epididymal sperm and in condensing spermatids (at protein level). Expressed in organs that contain cilia-bearing cells including brain, oviduct, lung, and uterus. Expressed in articular cartilage and bone.

It localises to the cytoplasm. The protein resides in the cytoskeleton. The protein localises to the flagellum axoneme. Its subcellular location is the cytoplasmic vesicle. It is found in the secretory vesicle. It localises to the acrosome. The protein resides in the golgi apparatus. Functionally, component of the central pair apparatus of ciliary axonemes. Plays a critical role in the function and structure of motile cilia. May play a role in endochondral bone formation, most likely because of a function in primary cilia of chondrocytes and osteoblasts. Essential for normal spermatogenesis and male fertility. Required for normal manchette structure, transport of proteins along the manchette microtubules and formation of the sperm head and flagellum. Essential for sperm flagellum development and proper assembly of the respiratory motile cilia central pair apparatus, but not the brain ependymal cilia. The chain is Sperm-associated antigen 17 (Spag17) from Mus musculus (Mouse).